A 78-amino-acid chain; its full sequence is DNA-directed RNA polymerase subunit omega (78 aa).

The protein belongs to the RNA polymerase subunit omega family. As to quaternary structure, in cyanobacteria the RNAP catalytic core is composed of 2 alpha, 1 beta, 1 beta', 1 gamma and 1 omega subunit. When a sigma factor is associated with the core the holoenzyme is formed, which can initiate transcription.

It carries out the reaction RNA(n) + a ribonucleoside 5'-triphosphate = RNA(n+1) + diphosphate. Promotes RNA polymerase assembly. Latches the N- and C-terminal regions of the beta' subunit thereby facilitating its interaction with the beta and alpha subunits. This Prochlorococcus marinus (strain MIT 9312) protein is DNA-directed RNA polymerase subunit omega.